A 383-amino-acid polypeptide reads, in one-letter code: NAD(P) transhydrogenase subunit alpha part 1 (383 aa).

Residues 131–134, V181, 201–203, and G231 contribute to the NAD(+) site; these read QNMD and DVR.

The protein belongs to the AlaDH/PNT family. Heterotrimer of two alpha chains and a beta (PntB) chain; in Rickettsia, the alpha chain is made of two subunits (PntAA and PntAB) and forms a dimer.

The enzyme catalyses NAD(+) + NADPH + H(+)(in) = NADH + NADP(+) + H(+)(out). Functionally, the transhydrogenation between NADH and NADP is coupled to respiration and ATP hydrolysis and functions as a proton pump across the membrane. The chain is NAD(P) transhydrogenase subunit alpha part 1 (pntAA) from Rickettsia prowazekii (strain Madrid E).